A 322-amino-acid polypeptide reads, in one-letter code: D-alanine--D-alanine ligase (322 aa).

The region spanning Lys110–Glu310 is the ATP-grasp domain. Position 137 to 191 (Met137 to Ala191) interacts with ATP. Positions 263, 277, and 279 each coordinate Mg(2+).

Belongs to the D-alanine--D-alanine ligase family. Mg(2+) is required as a cofactor. Requires Mn(2+) as cofactor.

Its subcellular location is the cytoplasm. It carries out the reaction 2 D-alanine + ATP = D-alanyl-D-alanine + ADP + phosphate + H(+). It functions in the pathway cell wall biogenesis; peptidoglycan biosynthesis. Its function is as follows. Cell wall formation. The polypeptide is D-alanine--D-alanine ligase (Caulobacter sp. (strain K31)).